The following is a 110-amino-acid chain: Large ribosomal subunit protein uL24 (110 aa).

This sequence belongs to the universal ribosomal protein uL24 family. As to quaternary structure, part of the 50S ribosomal subunit.

In terms of biological role, one of two assembly initiator proteins, it binds directly to the 5'-end of the 23S rRNA, where it nucleates assembly of the 50S subunit. Functionally, one of the proteins that surrounds the polypeptide exit tunnel on the outside of the subunit. The polypeptide is Large ribosomal subunit protein uL24 (Roseiflexus sp. (strain RS-1)).